The following is a 453-amino-acid chain: Bifunctional protein GlmU (453 aa).

A pyrophosphorylase region spans residues 1–227; sequence MTQDIVILAA…EAEVAGVNDR (227 aa). UDP-N-acetyl-alpha-D-glucosamine contacts are provided by residues 8-11, lysine 22, glutamine 73, 78-79, 100-102, glycine 137, glutamate 152, asparagine 167, and asparagine 225; these read LAAG, GT, and YGD. Aspartate 102 contributes to the Mg(2+) binding site. Asparagine 225 is a Mg(2+) binding site. A linker region spans residues 228 to 248; the sequence is VQLAALERELQNQQAVSLMQN. The tract at residues 249-453 is N-acetyltransferase; the sequence is GATLLDPSRI…KDNWPRPIKK (205 aa). Arginine 331 and lysine 349 together coordinate UDP-N-acetyl-alpha-D-glucosamine. Histidine 361 functions as the Proton acceptor in the catalytic mechanism. UDP-N-acetyl-alpha-D-glucosamine-binding residues include tyrosine 364 and asparagine 375. Acetyl-CoA is bound by residues alanine 378, 384-385, serine 403, alanine 421, and arginine 438; that span reads NY.

In the N-terminal section; belongs to the N-acetylglucosamine-1-phosphate uridyltransferase family. The protein in the C-terminal section; belongs to the transferase hexapeptide repeat family. In terms of assembly, homotrimer. Mg(2+) is required as a cofactor.

The protein localises to the cytoplasm. The catalysed reaction is alpha-D-glucosamine 1-phosphate + acetyl-CoA = N-acetyl-alpha-D-glucosamine 1-phosphate + CoA + H(+). It catalyses the reaction N-acetyl-alpha-D-glucosamine 1-phosphate + UTP + H(+) = UDP-N-acetyl-alpha-D-glucosamine + diphosphate. The protein operates within nucleotide-sugar biosynthesis; UDP-N-acetyl-alpha-D-glucosamine biosynthesis; N-acetyl-alpha-D-glucosamine 1-phosphate from alpha-D-glucosamine 6-phosphate (route II): step 2/2. Its pathway is nucleotide-sugar biosynthesis; UDP-N-acetyl-alpha-D-glucosamine biosynthesis; UDP-N-acetyl-alpha-D-glucosamine from N-acetyl-alpha-D-glucosamine 1-phosphate: step 1/1. It functions in the pathway bacterial outer membrane biogenesis; LPS lipid A biosynthesis. Its function is as follows. Catalyzes the last two sequential reactions in the de novo biosynthetic pathway for UDP-N-acetylglucosamine (UDP-GlcNAc). The C-terminal domain catalyzes the transfer of acetyl group from acetyl coenzyme A to glucosamine-1-phosphate (GlcN-1-P) to produce N-acetylglucosamine-1-phosphate (GlcNAc-1-P), which is converted into UDP-GlcNAc by the transfer of uridine 5-monophosphate (from uridine 5-triphosphate), a reaction catalyzed by the N-terminal domain. The protein is Bifunctional protein GlmU of Marinomonas sp. (strain MWYL1).